A 576-amino-acid chain; its full sequence is MAGUK p55 subfamily member 2 (576 aa).

L27 domains lie at Ser8–Gln60 and Leu84–Pro142. Ser42 carries the post-translational modification Phosphoserine. Thr141 carries the post-translational modification Phosphothreonine. Ser145 is modified (phosphoserine). The PDZ domain maps to Glu185–Leu240. In terms of domain architecture, SH3 spans Pro249–Lys317. Residues Arg374–Glu561 enclose the Guanylate kinase-like domain.

It belongs to the MAGUK family. In terms of assembly, can homomultimerise. Interacts with CACNG2. Interacts (via the SH3-Guanylate kinase-like sub-module) with DLG4/PSD95 and DLGAP1/GKAP. Interacts (via the PDZ domain) with CADM1 (via C-terminus). Interacts with KCNN2/SK2 (via N-terminal domain). Interacts with SRC. Post-translationally, phosphorylated by SRC.

It is found in the cytoplasm. The protein localises to the cytoskeleton. The protein resides in the membrane. It localises to the cell projection. Its subcellular location is the dendrite. It is found in the postsynaptic density. Postsynaptic MAGUK scaffold protein that links CADM1 cell adhesion molecules to core components of the postsynaptic density. In CA1 pyramidal neurons, required for synaptic KCNN2-containing channel function and long-term potentiation expression. Seems to negatively regulate SRC function in epithelial cells. This is MAGUK p55 subfamily member 2 from Homo sapiens (Human).